The sequence spans 175 residues: Large ribosomal subunit protein bL17m (175 aa).

A mitochondrion-targeting transit peptide spans 1-8; that stretch reads MRLSVCAA. Residues 155-175 form a disordered region; it reads DLSQSQEASNHSSHTAQTPGI. The segment covering 157–175 has biased composition (polar residues); it reads SQSQEASNHSSHTAQTPGI.

It belongs to the bacterial ribosomal protein bL17 family. As to quaternary structure, component of the mitochondrial ribosome large subunit (39S) which comprises a 16S rRNA and about 50 distinct proteins.

It localises to the mitochondrion. The sequence is that of Large ribosomal subunit protein bL17m (MRPL17) from Pongo abelii (Sumatran orangutan).